A 612-amino-acid chain; its full sequence is Dihydroxy-acid dehydratase (612 aa).

Position 81 (D81) interacts with Mg(2+). Residue C122 participates in [2Fe-2S] cluster binding. Residues D123 and K124 each contribute to the Mg(2+) site. K124 carries the post-translational modification N6-carboxylysine. C195 provides a ligand contact to [2Fe-2S] cluster. E491 lines the Mg(2+) pocket. S517 serves as the catalytic Proton acceptor.

The protein belongs to the IlvD/Edd family. Homodimer. Requires [2Fe-2S] cluster as cofactor. Mg(2+) is required as a cofactor.

The catalysed reaction is (2R)-2,3-dihydroxy-3-methylbutanoate = 3-methyl-2-oxobutanoate + H2O. It carries out the reaction (2R,3R)-2,3-dihydroxy-3-methylpentanoate = (S)-3-methyl-2-oxopentanoate + H2O. It functions in the pathway amino-acid biosynthesis; L-isoleucine biosynthesis; L-isoleucine from 2-oxobutanoate: step 3/4. The protein operates within amino-acid biosynthesis; L-valine biosynthesis; L-valine from pyruvate: step 3/4. Functionally, functions in the biosynthesis of branched-chain amino acids. Catalyzes the dehydration of (2R,3R)-2,3-dihydroxy-3-methylpentanoate (2,3-dihydroxy-3-methylvalerate) into 2-oxo-3-methylpentanoate (2-oxo-3-methylvalerate) and of (2R)-2,3-dihydroxy-3-methylbutanoate (2,3-dihydroxyisovalerate) into 2-oxo-3-methylbutanoate (2-oxoisovalerate), the penultimate precursor to L-isoleucine and L-valine, respectively. The sequence is that of Dihydroxy-acid dehydratase from Haemophilus influenzae (strain PittGG).